Here is a 225-residue protein sequence, read N- to C-terminus: Ribonuclease 3 (225 aa).

Positions 7–129 (IPRLCRTLGY…IIGAIYLDSD (123 aa)) constitute an RNase III domain. Glu-42 serves as a coordination point for Mg(2+). Asp-46 is a catalytic residue. Residues Asp-115 and Glu-118 each contribute to the Mg(2+) site. The active site involves Glu-118. One can recognise a DRBM domain in the interval 155-225 (DPKTLLQEHL…AAQVLELIKK (71 aa)).

This sequence belongs to the ribonuclease III family. As to quaternary structure, homodimer. Requires Mg(2+) as cofactor.

It localises to the cytoplasm. It carries out the reaction Endonucleolytic cleavage to 5'-phosphomonoester.. Functionally, digests double-stranded RNA. Involved in the processing of primary rRNA transcript to yield the immediate precursors to the large and small rRNAs (23S and 16S). Processes some mRNAs, and tRNAs when they are encoded in the rRNA operon. Processes pre-crRNA and tracrRNA of type II CRISPR loci if present in the organism. The polypeptide is Ribonuclease 3 (Shewanella piezotolerans (strain WP3 / JCM 13877)).